Reading from the N-terminus, the 400-residue chain is Tryptophan--tRNA ligase (400 aa).

The 'HIGH' region motif lies at 12-20 (PTGALHLGH). The segment at 173–241 (REPGFEQKAL…RLFGYLEGAR (69 aa)) is insert. The 'KMSKS' region signature appears at 265-269 (KMSKS). Residue lysine 268 coordinates ATP. The disordered stretch occupies residues 280–305 (KASVEKKVRTMPTDPARVRRTDPGDP). The span at 295–304 (ARVRRTDPGD) shows a compositional bias: basic and acidic residues.

Belongs to the class-I aminoacyl-tRNA synthetase family. As to quaternary structure, homodimer.

It is found in the cytoplasm. It carries out the reaction tRNA(Trp) + L-tryptophan + ATP = L-tryptophyl-tRNA(Trp) + AMP + diphosphate + H(+). In Ralstonia nicotianae (strain ATCC BAA-1114 / GMI1000) (Ralstonia solanacearum), this protein is Tryptophan--tRNA ligase (trpS).